The chain runs to 431 residues: MCRTLIDGPVRSAIAKVRQIDTTSSTPAAARRVTSPPARETRAAVLLLVLSVGARLAWTYLAPNGANFVDLHVYVSGAASLDHPGTLYGYVYADQTPDFPLPFTYPPFAAVVFYPLHLVPFGLIALLWQVVTMAALYGAVRISQRLMGGTAETGHFAAMLWTAIAIWIEPLRSTFDYGQINVLLMLAALWAVYTPRWWLSGLLVGVASGVKLTPAITAVYLVGVRRLHAAAFSVVVFLATVGVSLLVVGDEARYYFTDLLGDAGRVGPIATSFNQSWRGAISRILGHDAGFGPLVLAAIASTAVLAILAWRALDRSDRLGKLLVVELFGLLLSPISWTHHWVWLVPLMIWLIDGPARERPGARILGWGWLVLTIVGVPWLLSFAQPSIWQIGRPWYLAWAGLVYVVATLATLGWIAASERYVRIRPRRMAN.

10 helical membrane-spanning segments follow: residues 43-63, 108-128, 148-168, 175-195, 202-222, 229-249, 290-310, 332-352, 364-384, and 397-417; these read AAVLLLVLSVGARLAWTYLAP, FAAVVFYPLHLVPFGLIALLW, GGTAETGHFAAMLWTAIAIWI, FDYGQINVLLMLAALWAVYTP, LLVGVASGVKLTPAITAVYLV, AAAFSVVVFLATVGVSLLVVG, GFGPLVLAAIASTAVLAILAW, LSPISWTHHWVWLVPLMIWLI, ILGWGWLVLTIVGVPWLLSFA, and LAWAGLVYVVATLATLGWIAA.

This sequence belongs to the glycosyltransferase 87 family.

It is found in the cell membrane. It participates in phospholipid metabolism; phosphatidylinositol metabolism. Functionally, catalyzes the alpha-1,2 addition of a mannose residue from polyprenol-phosphate-mannose (PPM) to a monoacyl phosphatidylinositol tetramannoside (AcPIM4) to generate a monoacyl phosphatidylinositol pentamannoside (AcPIM5). This is Polyprenol-phosphate-mannose-dependent alpha-(1-2)-phosphatidylinositol pentamannoside mannosyltransferase (pimE) from Mycobacterium tuberculosis (strain CDC 1551 / Oshkosh).